A 557-amino-acid polypeptide reads, in one-letter code: Intraflagellar transport protein 56 (557 aa).

The segment at 1-30 is disordered; sequence MLLSRMKPAVGGEASTSSNEKKRKNKSKKI. Positions 21 to 30 are enriched in basic residues; sequence KKRKNKSKKI. TPR repeat units follow at residues 60–93, 95–128, 154–187, and 471–504; these read EHADLWTGFCAFHVGDHKRAMEEYKALTLRPDCP, DVWVYLGCALFFLGLYKEAEEAALKGSKTQLQNR, TEDQLSLASIHYMRSHYQEAIDIYKRILLQNREF, and ANDCYKMGQFYYAAKAFDALERLDPNPEYWEGKR.

The protein belongs to the IFT56 family. In terms of assembly, component of the IFT complex B.

The protein localises to the cell projection. Its subcellular location is the cilium. Functionally, component of the intraflagellar transport (IFT) complex B required for transport of proteins in the motile cilium. Required for transport of specific ciliary cargo proteins related to motility, while it is neither required for IFT complex B assembly or motion nor for cilium assembly. Plays a key role in maintaining the integrity of the IFT complex B and the proper ciliary localization of the IFT complex B components. Essential for maintaining proper microtubule organization within the ciliary axoneme. The sequence is that of Intraflagellar transport protein 56 from Danio rerio (Zebrafish).